Reading from the N-terminus, the 688-residue chain is MFKKLFGQLQRIGKALMLPVAILPAAGILLAFGNAMHNEQLVEIAPWLKNDIIVMISSVMEASGQVVFDNLPLLFAVGTALGLAGGDGVAALAALVGYLIMNATMGKVLHITIDDIFSYAKGAKELSQAAKEPAHALVLGIPTLQTGVFGGIIMGALAAWCYNKFYNITLPPFLGFFAGKRFVPIVTSVVAIATGVVLSFAWPPIQDGLNSLSNFLLNKNLTLTTFIFGIIERSLIPFGLHHIFYSPFWFEFGSYTNHAGELVRGDQRIWMAQLRDGVPFTAGAFTTGKYPFMMFGLPAAAFAIYKNARPERKKVVGGLMLSAGLTAFLTGITEPLEFSFLFVAPVLYGIHVLLAGTSFLVMHLLGVKIGMTFSGGFIDYILYGLLNWDRSHALLVIPVGIVYAIVYYFLFDFAIRKFKLKTPGREDEETEIRNSSVAKLPFDVLDAMGGKENIKHLDACITRLRVEVVDKSKVDVAGIKALGASGVLEVGNNMQAIFGPKSDQIKHDMAKIMSGEITKPSETTVTEEMSDEPVHVEALGTTDIYAPGVGQIIPLSEVPDQVFAGKMMGDGVGFIPEKGEIVAPFDGTVKTIFPTKHAIGLESGSGVEVLIHIGIDTVKLNGEGFESLINVDEKVTQGQPLMKVNLAYLKAHAPSIVTPMIITNLENKELVIEDVQDADPGKLIMTVK.

The PTS EIIC type-1 domain occupies Lys-3–Asp-427. The next 10 membrane-spanning stretches (helical) occupy residues Ile-12 to Phe-32, Leu-81 to Met-101, Leu-137 to Leu-157, Phe-182 to Trp-202, Leu-223 to Ile-243, Ala-284 to Ile-304, Val-315 to Pro-335, Phe-340 to Leu-360, Leu-364 to Gly-384, and Leu-395 to Ile-415. In terms of domain architecture, PTS EIIB type-1 spans Ala-438–Lys-519. Cys-460 (phosphocysteine intermediate; for EIIB activity) is an active-site residue. One can recognise a PTS EIIA type-1 domain in the interval Asp-560–Asn-664. Catalysis depends on His-612, which acts as the Tele-phosphohistidine intermediate; for EIIA activity.

It localises to the cell membrane. Its function is as follows. The phosphoenolpyruvate-dependent sugar phosphotransferase system (sugar PTS), a major carbohydrate active -transport system, catalyzes the phosphorylation of incoming sugar substrates concomitantly with their translocation across the cell membrane. This system is involved in alpha- and beta-glucoside transport. The sequence is that of PTS system glucoside-specific EIICBA component (glcB) from Staphylococcus aureus (strain bovine RF122 / ET3-1).